The primary structure comprises 377 residues: Spermidine/putrescine import ATP-binding protein PotA (377 aa).

An ABC transporter domain is found at 18–248; that stretch reads IRLSGISKSF…PKNLFVARFI (231 aa). 50-57 serves as a coordination point for ATP; sequence GPSGCGKT.

It belongs to the ABC transporter superfamily. Spermidine/putrescine importer (TC 3.A.1.11.1) family. In terms of assembly, the complex is composed of two ATP-binding proteins (PotA), two transmembrane proteins (PotB and PotC) and a solute-binding protein (PotD).

It is found in the cell inner membrane. It catalyses the reaction ATP + H2O + polyamine-[polyamine-binding protein]Side 1 = ADP + phosphate + polyamineSide 2 + [polyamine-binding protein]Side 1.. Part of the ABC transporter complex PotABCD involved in spermidine/putrescine import. Responsible for energy coupling to the transport system. This Vibrio parahaemolyticus serotype O3:K6 (strain RIMD 2210633) protein is Spermidine/putrescine import ATP-binding protein PotA.